The following is a 382-amino-acid chain: Alanine racemase (382 aa).

Residue K37 is the Proton acceptor; specific for D-alanine of the active site. At K37 the chain carries N6-(pyridoxal phosphate)lysine. Residue R135 participates in substrate binding. Residue Y267 is the Proton acceptor; specific for L-alanine of the active site. M315 provides a ligand contact to substrate.

This sequence belongs to the alanine racemase family. Requires pyridoxal 5'-phosphate as cofactor.

The catalysed reaction is L-alanine = D-alanine. The protein operates within amino-acid biosynthesis; D-alanine biosynthesis; D-alanine from L-alanine: step 1/1. Its function is as follows. Catalyzes the interconversion of L-alanine and D-alanine. May also act on other amino acids. The sequence is that of Alanine racemase (alr) from Geobacter sulfurreducens (strain ATCC 51573 / DSM 12127 / PCA).